We begin with the raw amino-acid sequence, 273 residues long: Ribosomal RNA small subunit methyltransferase A (273 aa).

Residues Asn18, Leu20, Gly45, Glu66, Asp91, and Asn113 each contribute to the S-adenosyl-L-methionine site.

It belongs to the class I-like SAM-binding methyltransferase superfamily. rRNA adenine N(6)-methyltransferase family. RsmA subfamily.

It is found in the cytoplasm. It catalyses the reaction adenosine(1518)/adenosine(1519) in 16S rRNA + 4 S-adenosyl-L-methionine = N(6)-dimethyladenosine(1518)/N(6)-dimethyladenosine(1519) in 16S rRNA + 4 S-adenosyl-L-homocysteine + 4 H(+). Its function is as follows. Specifically dimethylates two adjacent adenosines (A1518 and A1519) in the loop of a conserved hairpin near the 3'-end of 16S rRNA in the 30S particle. May play a critical role in biogenesis of 30S subunits. The polypeptide is Ribosomal RNA small subunit methyltransferase A (Enterobacter sp. (strain 638)).